We begin with the raw amino-acid sequence, 170 residues long: Large ribosomal subunit protein uL15 (170 aa).

A compositionally biased stretch (basic and acidic residues) spans 1–12 (MKLHDLRPAEGA). Residues 1–52 (MKLHDLRPAEGAHRKRKRIGRGHGSGKGKTGGKGMMGQKARSGPGPYRTFEG) are disordered. Residues 13 to 26 (HRKRKRIGRGHGSG) show a composition bias toward basic residues.

Belongs to the universal ribosomal protein uL15 family. In terms of assembly, part of the 50S ribosomal subunit.

Functionally, binds to the 23S rRNA. In Chloroflexus aurantiacus (strain ATCC 29366 / DSM 635 / J-10-fl), this protein is Large ribosomal subunit protein uL15.